Here is a 104-residue protein sequence, read N- to C-terminus: Large ribosomal subunit protein eL31 (104 aa).

The protein belongs to the eukaryotic ribosomal protein eL31 family.

This is Large ribosomal subunit protein eL31 (rpl31e) from Aeropyrum pernix (strain ATCC 700893 / DSM 11879 / JCM 9820 / NBRC 100138 / K1).